The sequence spans 508 residues: MERNKNYYINVFHKQAENDLNFNKFYFYFFQETFYCLAYKQVSYKFLQNNVFIKKKKKFSFFNLKRTIRSMRNQNYKESFFFIEQKKLSKKLLFSKLFYELLQEILKCILEISFKIKKNPKISSYSTMSSIHGPFISFEENLIYFPVAIQSYLPNRVHPELIVRILRSYNLDVNLFHFLRNIVHNGLYILSPPFLLNFGFRSLSTIFFNIYAYEIDLGFLSFLKLQKDLPQKYQTELDIFSSSRKITFYFKNYSDFNNLKKIDQIERKYNNIIDYGPIYYLRYSNILLISLNLIKKNANFFQLIYIRFFHLRFHFLFAKNLVKKISFNQDQIFFLGFLVFFFYTKIQIRIKLKKCLVNFIKLEKKICINVPIKLLIIFLSKNGFCDISGNSKSKLSWSVLQDIEIIEKFRRLWLTISGYYSGSSNKYCLKIVLYILRYSCAKTLACKHKMSLKKIWKKYTLNLSVTLKFQTGKKKFLSFSHFKDFHKDEKSWQLNLKETNSIVYTFWN.

It belongs to the intron maturase 2 family. MatK subfamily.

The protein localises to the plastid. Its subcellular location is the chloroplast. Usually encoded in the trnK tRNA gene intron. Probably assists in splicing its own and other chloroplast group II introns. This chain is Maturase K, found in Chaetosphaeridium globosum (Charophycean green alga).